We begin with the raw amino-acid sequence, 183 residues long: MSRKARDPIVLPQGVEVSIQNDEISVKGPKGSLTQVLAKEVEIAVKGNEVFVAPAAHVVDRPGRMQGLYWALIANMVKGVHTGFEKRLEMIGVGFRAAVQGSLLDLSIGVSHPTKMPIPTGLEVSVEKNTLISIKGINKQLVGEFAACVRAKRPPEPYKGKGIRYENEYVRRKAGKAAKTGKK.

The protein belongs to the universal ribosomal protein uL6 family. Part of the 50S ribosomal subunit.

In terms of biological role, this protein binds to the 23S rRNA, and is important in its secondary structure. It is located near the subunit interface in the base of the L7/L12 stalk, and near the tRNA binding site of the peptidyltransferase center. The chain is Large ribosomal subunit protein uL6 from Chlamydia trachomatis serovar L2 (strain ATCC VR-902B / DSM 19102 / 434/Bu).